Here is a 485-residue protein sequence, read N- to C-terminus: tRNA sulfurtransferase (485 aa).

Residues 61-165 form the THUMP domain; that stretch reads EELIALLQRI…DDKMMLVKAR (105 aa). ATP-binding positions include 183–184, K265, G287, and Q296; that span reads LI. C344 and C456 form a disulfide bridge. In terms of domain architecture, Rhodanese spans 404 to 483; it reads LSENEVILDI…FSNVRVFAKK (80 aa). C456 functions as the Cysteine persulfide intermediate in the catalytic mechanism.

It belongs to the ThiI family.

The protein resides in the cytoplasm. It catalyses the reaction [ThiI sulfur-carrier protein]-S-sulfanyl-L-cysteine + a uridine in tRNA + 2 reduced [2Fe-2S]-[ferredoxin] + ATP + H(+) = [ThiI sulfur-carrier protein]-L-cysteine + a 4-thiouridine in tRNA + 2 oxidized [2Fe-2S]-[ferredoxin] + AMP + diphosphate. The enzyme catalyses [ThiS sulfur-carrier protein]-C-terminal Gly-Gly-AMP + S-sulfanyl-L-cysteinyl-[cysteine desulfurase] + AH2 = [ThiS sulfur-carrier protein]-C-terminal-Gly-aminoethanethioate + L-cysteinyl-[cysteine desulfurase] + A + AMP + 2 H(+). Its pathway is cofactor biosynthesis; thiamine diphosphate biosynthesis. Functionally, catalyzes the ATP-dependent transfer of a sulfur to tRNA to produce 4-thiouridine in position 8 of tRNAs, which functions as a near-UV photosensor. Also catalyzes the transfer of sulfur to the sulfur carrier protein ThiS, forming ThiS-thiocarboxylate. This is a step in the synthesis of thiazole, in the thiamine biosynthesis pathway. The sulfur is donated as persulfide by IscS. The protein is tRNA sulfurtransferase of Haemophilus influenzae (strain PittEE).